Reading from the N-terminus, the 421-residue chain is Probable N-acetylgalactosaminyltransferase 8 (421 aa).

At 1–3 (MRR) the chain is on the cytoplasmic side. A helical; Signal-anchor for type II membrane protein membrane pass occupies residues 4 to 24 (HVVLSIFVFAGIVFAAEEAEK). Topologically, residues 25-421 (LPKCEHVDPY…ELEPKVHDEL (397 aa)) are lumenal. Residues Asn52 and Asn58 are each glycosylated (N-linked (GlcNAc...) asparagine). 2 disulfides stabilise this stretch: Cys98–Cys331 and Cys322–Cys399. The catalytic subdomain A stretch occupies residues 106 to 219 (SYSTSVVVIH…ERWLEPLLQP (114 aa)). Substrate contacts are provided by Asp147 and Arg180. Residue Asp203 coordinates Mn(2+). Ser204 contributes to the substrate binding site. His205 contributes to the Mn(2+) binding site. The catalytic subdomain B stretch occupies residues 277–339 (PFNSPAMPGG…PCSRVGHVFR (63 aa)). Trp308 serves as a coordination point for substrate. His336 is a Mn(2+) binding site. Residues Arg339 and Tyr344 each contribute to the substrate site. Residues 418-421 (HDEL) carry the Prevents secretion from ER motif.

The protein belongs to the glycosyltransferase 2 family. GalNAc-T subfamily. The cofactor is Mn(2+).

Its subcellular location is the golgi apparatus membrane. It participates in protein modification; protein glycosylation. Functionally, potential glycopeptide transferase involved in O-linked oligosaccharide biosynthesis. In contrast to other members of the family, it does not act as a peptide transferase that transfers GalNAc onto serine or threonine residue on peptides that have been tested. Some peptide transferase activity is however not excluded, considering that its appropriate peptide substrate may remain unidentified. This Caenorhabditis elegans protein is Probable N-acetylgalactosaminyltransferase 8 (gly-8).